Consider the following 280-residue polypeptide: Hydroxyethylthiazole kinase (280 aa).

Met-50 lines the substrate pocket. The ATP site is built by Lys-125 and Thr-178. Gly-205 serves as a coordination point for substrate.

The protein belongs to the Thz kinase family. It depends on Mg(2+) as a cofactor.

The enzyme catalyses 5-(2-hydroxyethyl)-4-methylthiazole + ATP = 4-methyl-5-(2-phosphooxyethyl)-thiazole + ADP + H(+). It participates in cofactor biosynthesis; thiamine diphosphate biosynthesis; 4-methyl-5-(2-phosphoethyl)-thiazole from 5-(2-hydroxyethyl)-4-methylthiazole: step 1/1. Functionally, catalyzes the phosphorylation of the hydroxyl group of 4-methyl-5-beta-hydroxyethylthiazole (THZ). The chain is Hydroxyethylthiazole kinase from Lacticaseibacillus casei (strain BL23) (Lactobacillus casei).